The following is a 144-amino-acid chain: Maximins 9/H3 (144 aa).

Residues 1 to 18 form the signal peptide; that stretch reads MNFKYIVAVSFLIASAYA. The propeptide occupies 19 to 43; the sequence is RSVKNDEQSLSQRDVLEEESLREIR. The residue at position 70 (Tyr-70) is a Tyrosine amide. The propeptide occupies 74–123; it reads TAEEHEVMKRLEAIMRDLDSLDHPEEASERETRGFNQDEIANLFTKKEKR. Ile-143 bears the Isoleucine amide mark.

The protein belongs to the bombinin family. In terms of tissue distribution, expressed by the skin glands.

The protein localises to the secreted. Functionally, maximin-9 shows antimicrobial activity against bacteria and against the fungus C.albicans. It has little hemolytic activity. Its function is as follows. Maximin-H3 shows antibacterial activity against both Gram-positive and Gram-negative bacteria. It also shows antimicrobial activity against the fungus C.albicans. Shows strong hemolytic activity. The sequence is that of Maximins 9/H3 from Bombina maxima (Giant fire-bellied toad).